A 143-amino-acid polypeptide reads, in one-letter code: Flagellar assembly factor FliW (143 aa).

It belongs to the FliW family. In terms of assembly, interacts with translational regulator CsrA and flagellin(s).

The protein localises to the cytoplasm. Its function is as follows. Acts as an anti-CsrA protein, binds CsrA and prevents it from repressing translation of its target genes, one of which is flagellin. Binds to flagellin and participates in the assembly of the flagellum. This is Flagellar assembly factor FliW from Clostridium botulinum (strain Langeland / NCTC 10281 / Type F).